Reading from the N-terminus, the 958-residue chain is DNA repair and recombination protein RDH54 (958 aa).

The segment at 189–217 is disordered; it reads EALSQNMGNPSPPTTSTTETVPSTKNDGG. A compositionally biased stretch (low complexity) spans 202-212; sequence TTSTTETVPST. The region spanning 333-521 is the Helicase ATP-binding domain; sequence LENDSDISGC…FTIIDFINPG (189 aa). 380–387 provides a ligand contact to ATP; that stretch reads IPLTGLCK. Positions 506-509 match the DEGH box motif; it reads NDLN. A Glycyl lysine isopeptide (Lys-Gly) (interchain with G-Cter in ubiquitin) cross-link involves residue K649. One can recognise a Helicase C-terminal domain in the interval 665–824; that stretch reads KLKVLMTLLE…DSEMRNKESS (160 aa).

The protein belongs to the SNF2/RAD54 helicase family. In terms of assembly, interacts with RAD51 and DMC1.

It localises to the nucleus. The enzyme catalyses ATP + H2O = ADP + phosphate + H(+). Functionally, involved in the recombinational repair of double-strand breaks (DSB) in DNA during mitosis and meiosis. Has DNA dependent ATPase activity. Promotes D-loop (displacement loop) formation with RAD51 recombinase. Modifies the topology of double-stranded DNA during the D-loop reaction to facilitate the invasion of the homologous duplex molecule by the initiating single-stranded DNA substrate. Required for adaptation from G2/M checkpoint arrest induced by a double strand break, by participating in monitoring the extent of single-stranded DNA produced by resection of DNA ends. This role is distinct from its roles in recombination. Promotes colocalization of RAD51 and DMC1 during meiotic recombination. Involved in crossover interference. In Saccharomyces cerevisiae (strain ATCC 204508 / S288c) (Baker's yeast), this protein is DNA repair and recombination protein RDH54 (RDH54).